Here is a 407-residue protein sequence, read N- to C-terminus: Putative mannan endo-1,4-beta-mannosidase 9 (407 aa).

The signal sequence occupies residues 1–31 (MGSKRRVILLPTLGVVVLAIAAAVLLHAGEA). The substrate site is built by Trp-95 and Asn-208. Glu-209 functions as the Proton donor in the catalytic mechanism. Substrate is bound at residue Tyr-284. The active-site Nucleophile is the Glu-324. Substrate is bound at residue Trp-366.

The protein belongs to the glycosyl hydrolase 5 (cellulase A) family. As to expression, expression not detected.

It localises to the secreted. It catalyses the reaction Random hydrolysis of (1-&gt;4)-beta-D-mannosidic linkages in mannans, galactomannans and glucomannans.. The sequence is that of Putative mannan endo-1,4-beta-mannosidase 9 (MAN9) from Oryza sativa subsp. japonica (Rice).